A 329-amino-acid polypeptide reads, in one-letter code: Ketol-acid reductoisomerase (NADP(+)) (329 aa).

The KARI N-terminal Rossmann domain maps to 2 to 182 (TQLFYDTDAD…GGTRAGILET (181 aa)). Residues 25–28 (YGSQ), S51, S53, and 83–86 (DEFQ) contribute to the NADP(+) site. H108 is an active-site residue. Position 134 (G134) interacts with NADP(+). The KARI C-terminal knotted domain maps to 183 to 328 (NFKEETETDL…KGLRSMFSWL (146 aa)). The Mg(2+) site is built by D191, E195, E227, and E231. A substrate-binding site is contributed by S252.

It belongs to the ketol-acid reductoisomerase family. The cofactor is Mg(2+).

It carries out the reaction (2R)-2,3-dihydroxy-3-methylbutanoate + NADP(+) = (2S)-2-acetolactate + NADPH + H(+). The enzyme catalyses (2R,3R)-2,3-dihydroxy-3-methylpentanoate + NADP(+) = (S)-2-ethyl-2-hydroxy-3-oxobutanoate + NADPH + H(+). It functions in the pathway amino-acid biosynthesis; L-isoleucine biosynthesis; L-isoleucine from 2-oxobutanoate: step 2/4. It participates in amino-acid biosynthesis; L-valine biosynthesis; L-valine from pyruvate: step 2/4. Involved in the biosynthesis of branched-chain amino acids (BCAA). Catalyzes an alkyl-migration followed by a ketol-acid reduction of (S)-2-acetolactate (S2AL) to yield (R)-2,3-dihydroxy-isovalerate. In the isomerase reaction, S2AL is rearranged via a Mg-dependent methyl migration to produce 3-hydroxy-3-methyl-2-ketobutyrate (HMKB). In the reductase reaction, this 2-ketoacid undergoes a metal-dependent reduction by NADPH to yield (R)-2,3-dihydroxy-isovalerate. This is Ketol-acid reductoisomerase (NADP(+)) from Prochlorococcus marinus (strain MIT 9312).